The chain runs to 311 residues: Long form salivary protein D7L1 (311 aa).

The signal sequence occupies residues 1-16 (MKALIFLGAIIAGVLS). Intrachain disulfides connect Cys-34/Cys-67 and Cys-63/Cys-120. ADP contacts are provided by Ser-146, Arg-149, Tyr-153, and Lys-160. Cystine bridges form between Cys-170-Cys-202, Cys-183-Cys-311, and Cys-244-Cys-258. The ADP site is built by Asn-281, Tyr-282, and Ser-283.

It belongs to the PBP/GOBP family. In terms of tissue distribution, distal lateral and medial lobes of female mosquito salivary gland (at protein level). Expressed in the head and thorax of the female mosquitoes, where the salivary glands are located. Expressed in salivary gland. Not detected in the female mosquito abdomen. Not detected in the male mosquito tissues.

It localises to the secreted. Its function is as follows. Modulates blood feeding of female mosquitoes on vertebrate species by binding and sequestering different mediators involved in the host response. Binds adenine, adenosine, AMP, ADP and ATP, with the highest affinity to ATP and ADP. Inhibits agonist-induced platelet aggregation and hemostasis. The sequence is that of Long form salivary protein D7L1 from Culex quinquefasciatus (Southern house mosquito).